The chain runs to 584 residues: MKNSHIYILYGSETGTAEGLAESLFRSLTRMGYDVLVNSMDDFNLENLLRPLQCVFICSTTGQGEMPLNMRKFWRFLLRKKLPNTFLNDMQYAVFGCGDTSYTRFNWASKKLDSRLRQLGAQSFSSRGEGDEQHPDGVEGVFAYWCNHLYSQLAAIKTPSRPAFGEFDLLPPSFQIIIDESLGCKVKGFEDNNIVRHSRGKIEATLVHNKRISNIKHWQDVRHLAFKIPNFERWKPGDVAVLYPWNDDMSVNSFIECMGWESIKYSPLIISSNVAERKLPWFPNILNVFNLVKYVLSIHSVPSRTFFEMASHFSNNKMHKERLQEFSSYKNIDDYYDYTTRPRRTVLETLQEFKSVQIPIEYALDAFPVIRGRQYSIANRCDNSTGILELAVALVKYQTILKSPRQGICSRWICDLHENTSFNIDILPGFLNLSYQSNKPLIMVGPGTGVAPLRALIQERIYNGLKENLLFFGCRNKSMDFLFEKDWEKYTEEGTLKLFCAFSRDQEKKKYVQHSIQENGELVYNLLNEKDGMFFVSGSSGKMPSSVKDAIAGIVSKYSGCSISDGYSFVTSLEKKNRYYQETW.

The Flavodoxin-like domain occupies 6 to 150 (IYILYGSETG…VFAYWCNHLY (145 aa)). FMN-binding positions include 12 to 17 (SETGTA), 59 to 62 (STTG), 97 to 106 (CGDTSYTRFN), and Glu-132. In terms of domain architecture, FAD-binding FR-type spans 199–436 (RGKIEATLVH…LPGFLNLSYQ (238 aa)). FAD-binding positions include Arg-343, 373 to 376 (RQYS), and 407 to 410 (GICS). Residues Thr-448, 503–504 (SR), and 509–513 (KKYVQ) contribute to the NADP(+) site. An FAD-binding site is contributed by Trp-584.

Belongs to the NADPH-dependent diflavin oxidoreductase NDOR1 family. This sequence in the N-terminal section; belongs to the flavodoxin family. The protein in the C-terminal section; belongs to the flavoprotein pyridine nucleotide cytochrome reductase family. In terms of assembly, interacts with dre2; as part of the cytosolic iron-sulfur (Fe-S) protein assembly (CIA) machinery. The cofactor is FAD. It depends on FMN as a cofactor.

It is found in the cytoplasm. It localises to the mitochondrion. The enzyme catalyses 2 oxidized [2Fe-2S]-[protein] + NADPH = 2 reduced [2Fe-2S]-[protein] + NADP(+) + H(+). Functionally, NADPH-dependent reductase which is a central component of the cytosolic iron-sulfur (Fe-S) protein assembly (CIA) machinery. Transfers electrons from NADPH via its FAD and FMN prosthetic groups to the [2Fe-2S] cluster of dre2, another key component of the CIA machinery. In turn, this reduced cluster provides electrons for assembly of cytosolic iron-sulfur cluster proteins. Positively controls H(2)O(2)-induced cell death. This Schizosaccharomyces pombe (strain 972 / ATCC 24843) (Fission yeast) protein is NADPH-dependent diflavin oxidoreductase 1.